The chain runs to 547 residues: GID complex substrate-recognition subunit 10 (547 aa).

Polar residues-rich tracts occupy residues Met-1 to Glu-11 and Gly-28 to Gln-41. 4 disordered regions span residues Met-1–Arg-42, Glu-60–Thr-115, Arg-169–Ser-217, and Pro-285–Asn-313. Residues Ser-99–Gly-108 are compositionally biased toward basic residues. Residues Arg-169–Gln-185 show a composition bias toward polar residues. 3 stretches are compositionally biased toward low complexity: residues Pro-186–Pro-199, Ser-207–Ser-217, and Ser-298–Ser-307.

Belongs to the GID4/VID24 family. As to quaternary structure, substrate-recognition component of the GID/CTLH complex. In the absence of stress, the complex exists as an inactive anticipatory complex (GID(Ant)), composed of Gid1, the E3 ubiquitin-ligase Gid2, Gid5, Gid8, and the RING-like subunit Gid9, awaiting a substrate receptor to form the active E3 ligase complex. When cells are shifted to glucose-containing medium, the substrate receptor Gid4 is induced and becomes part of the complex, named GID(SR4). Additionally, Gid7 transforms the GID(SR4) E3 ligase core into a higher-order supramolecular assembly (Chelator-GID(SR4)). Under osmotic or heat stress, the substrate receptor Gid10 is induced and becomes part of the complex, named GID(SR10). Interacts with proteins that have an N-terminal Pro/N-degron.

It localises to the nucleus. Substrate-recognition component of the GID E3 ligase complex recruiting N termini and catalyzing ubiquitination of proteins targeted for degradation. GID E3 is regulated through assembly with interchangeable N-degron-binding substrate receptors induced by distinct environmental perturbations. Required for the adaptation to osmotic or heat stress. Specific for substrates with an N-terminal Pro (Pro/N-degron). This is GID complex substrate-recognition subunit 10 (gid10) from Schizosaccharomyces pombe (strain 972 / ATCC 24843) (Fission yeast).